Consider the following 1348-residue polypeptide: Vascular endothelial growth factor receptor 2 (1348 aa).

An N-terminal signal peptide occupies residues 1 to 20 (MELGPLRVLTVLLCLAPVFA). Topologically, residues 21-756 (GLFISMDQPT…GAEEKTNLEL (736 aa)) are extracellular. Asn-43, Asn-47, Asn-63, Asn-93, Asn-138, Asn-153, Asn-201, Asn-240, Asn-290, Asn-310, Asn-365, Asn-386, Asn-513, Asn-556, Asn-603, Asn-613, Asn-622, Asn-666, Asn-688, and Asn-710 each carry an N-linked (GlcNAc...) asparagine glycan. 7 Ig-like C2-type domains span residues 43–106 (NDTL…GDSQ), 138–202 (NKTV…IDNE), 220–312 (DLTM…KNSS), 320–405 (PFIH…HTFT), 412–534 (PQIG…RVIS), 540–651 (GLEI…KHLT), and 658–744 (PRLV…AFFS). A disulfide bridge connects residues Cys-50 and Cys-100. An intrachain disulfide couples Cys-145 to Cys-195. A disulfide bridge connects residues Cys-241 and Cys-299. A disulfide bond links Cys-436 and Cys-520. A disulfide bridge links Cys-561 with Cys-633. Cys-679 and Cys-728 are disulfide-bonded. Residues 757–777 (IILVGTAVIAMFFWLLLVIIL) form a helical membrane-spanning segment. The Cytoplasmic segment spans residues 778–1348 (RTVKRANGGD…SPAPVASLPL (571 aa)). In terms of domain architecture, Protein kinase spans 825-1155 (LKLGKPLGRG…FSELVEHLGN (331 aa)). ATP-binding positions include 831-839 (LGRGAFGQV) and Lys-859. Low complexity predominate over residues 958–967 (ITSSQSSTSS). The interval 958-983 (ITSSQSSTSSGFVEERSLSDVEEEDA) is disordered. The Proton acceptor role is filled by Asp-1021. A phosphotyrosine; by autocatalysis mark is found at Tyr-1047, Tyr-1052, Tyr-1168, and Tyr-1207. A disordered region spans residues 1280 to 1302 (PSKSNESVMSEASNQTSGYQSGY).

Belongs to the protein kinase superfamily. Tyr protein kinase family. CSF-1/PDGF receptor subfamily. Autophosphorylated on tyrosine residues upon ligand binding. Autophosphorylation occurs in trans, i.e. one subunit of the dimeric receptor phosphorylates tyrosine residues on the other subunit. In all endothelial tissues during onset of vascularization. In later development, present in lung, heart, intestine and skin.

The protein localises to the cell membrane. The protein resides in the cytoplasmic vesicle. It is found in the early endosome. It localises to the cell junction. Its subcellular location is the endoplasmic reticulum. The enzyme catalyses L-tyrosyl-[protein] + ATP = O-phospho-L-tyrosyl-[protein] + ADP + H(+). With respect to regulation, present in an inactive conformation in the absence of bound ligand. Binding of VEGFA, VEGFC or VEGFD leads to dimerization and activation by autophosphorylation on tyrosine residues. Functionally, tyrosine-protein kinase that acts as a cell-surface receptor for VEGFA, VEGFC and/or VEGFD and plays an essential role in the regulation of angiogenesis and vascular development. Promotes proliferation, survival, migration and differentiation of endothelial cells. Promotes reorganization of the actin cytoskeleton. Binding of vascular growth factors leads to the activation of several signaling cascades. Activation of PLCG1 leads to the production of the cellular signaling molecules diacylglycerol and inositol 1,4,5-trisphosphate and the activation of protein kinase C. Mediates activation of MAPK1/ERK2, MAPK3/ERK1 and the MAP kinase signaling pathway, as well as of the AKT1 signaling pathway. Mediates phosphorylation of PIK3R1, the regulatory subunit of phosphatidylinositol 3-kinase, reorganization of the actin cytoskeleton and activation of PTK2/FAK1. Required for VEGFA-mediated induction of NOS2 and NOS3, leading to the production of the signaling molecule nitric oxide (NO) by endothelial cells. This Coturnix japonica (Japanese quail) protein is Vascular endothelial growth factor receptor 2.